The chain runs to 195 residues: Nucleoside triphosphate pyrophosphatase (195 aa).

The active-site Proton acceptor is the Asp70.

It belongs to the Maf family. A divalent metal cation serves as cofactor.

It is found in the cytoplasm. It catalyses the reaction a ribonucleoside 5'-triphosphate + H2O = a ribonucleoside 5'-phosphate + diphosphate + H(+). It carries out the reaction a 2'-deoxyribonucleoside 5'-triphosphate + H2O = a 2'-deoxyribonucleoside 5'-phosphate + diphosphate + H(+). In terms of biological role, nucleoside triphosphate pyrophosphatase. May have a dual role in cell division arrest and in preventing the incorporation of modified nucleotides into cellular nucleic acids. This chain is Nucleoside triphosphate pyrophosphatase, found in Microcystis aeruginosa (strain NIES-843 / IAM M-2473).